The sequence spans 328 residues: Beta-ketoacyl-[acyl-carrier-protein] synthase III 2 (328 aa).

Active-site residues include cysteine 113 and histidine 255. Residues 256–260 form an ACP-binding region; it reads QANAR. The active site involves asparagine 285.

This sequence belongs to the thiolase-like superfamily. FabH family. In terms of assembly, homodimer.

It is found in the cytoplasm. It carries out the reaction malonyl-[ACP] + acetyl-CoA + H(+) = 3-oxobutanoyl-[ACP] + CO2 + CoA. Its pathway is lipid metabolism; fatty acid biosynthesis. Catalyzes the condensation reaction of fatty acid synthesis by the addition to an acyl acceptor of two carbons from malonyl-ACP. Catalyzes the first condensation reaction which initiates fatty acid synthesis and may therefore play a role in governing the total rate of fatty acid production. Possesses both acetoacetyl-ACP synthase and acetyl transacylase activities. Its substrate specificity determines the biosynthesis of branched-chain and/or straight-chain of fatty acids. In Lactiplantibacillus plantarum (strain ATCC BAA-793 / NCIMB 8826 / WCFS1) (Lactobacillus plantarum), this protein is Beta-ketoacyl-[acyl-carrier-protein] synthase III 2.